The following is a 463-amino-acid chain: Glutamate--tRNA ligase (463 aa).

Positions 10–20 match the 'HIGH' region motif; it reads PSPTGYLHIGG. Positions 252 to 256 match the 'KMSKS' region motif; that stretch reads KLSKR. ATP is bound at residue Lys255.

The protein belongs to the class-I aminoacyl-tRNA synthetase family. Glutamate--tRNA ligase type 1 subfamily. Monomer.

It localises to the cytoplasm. The catalysed reaction is tRNA(Glu) + L-glutamate + ATP = L-glutamyl-tRNA(Glu) + AMP + diphosphate. Functionally, catalyzes the attachment of glutamate to tRNA(Glu) in a two-step reaction: glutamate is first activated by ATP to form Glu-AMP and then transferred to the acceptor end of tRNA(Glu). This is Glutamate--tRNA ligase from Mycoplasmopsis agalactiae (strain NCTC 10123 / CIP 59.7 / PG2) (Mycoplasma agalactiae).